The primary structure comprises 72 residues: Translation initiation factor IF-1 (72 aa).

The S1-like domain maps to 1 to 72 (MAKDDVIEID…DKGRITYRYK (72 aa)).

The protein belongs to the IF-1 family. Component of the 30S ribosomal translation pre-initiation complex which assembles on the 30S ribosome in the order IF-2 and IF-3, IF-1 and N-formylmethionyl-tRNA(fMet); mRNA recruitment can occur at any time during PIC assembly.

The protein localises to the cytoplasm. One of the essential components for the initiation of protein synthesis. Stabilizes the binding of IF-2 and IF-3 on the 30S subunit to which N-formylmethionyl-tRNA(fMet) subsequently binds. Helps modulate mRNA selection, yielding the 30S pre-initiation complex (PIC). Upon addition of the 50S ribosomal subunit IF-1, IF-2 and IF-3 are released leaving the mature 70S translation initiation complex. The protein is Translation initiation factor IF-1 of Campylobacter fetus subsp. fetus (strain 82-40).